We begin with the raw amino-acid sequence, 223 residues long: MRIHDLDPENRPRERFLSSGPSALSSAELLALVLRSGTRHLNIVDTCQRIIAENGLERLASMTLGELQKTPGIGQAKAMQIVAIFELNNRLHHTRNTNRRVQGAKDVFEYMSGRIPDETQEHLFVLHLNTKNQVTKCVRVTVGTLNASLIHPREVFKSAIRESAHAIILVHNHPSGDTEPSNADRQVTTLLKQASAVIQIDLLDHVIIGKTSWFSFRESNLLG.

An MPN domain is found at 100–222 (RVQGAKDVFE…WFSFRESNLL (123 aa)). Zn(2+) is bound by residues histidine 171, histidine 173, and aspartate 184. Positions 171–184 (HNHPSGDTEPSNAD) match the JAMM motif motif.

The protein belongs to the UPF0758 family.

The sequence is that of UPF0758 protein Plut_0598 from Chlorobium luteolum (strain DSM 273 / BCRC 81028 / 2530) (Pelodictyon luteolum).